The chain runs to 135 residues: ATP synthase epsilon chain (135 aa).

It belongs to the ATPase epsilon chain family. As to quaternary structure, F-type ATPases have 2 components, CF(1) - the catalytic core - and CF(0) - the membrane proton channel. CF(1) has five subunits: alpha(3), beta(3), gamma(1), delta(1), epsilon(1). CF(0) has three main subunits: a, b and c.

The protein localises to the cell inner membrane. Produces ATP from ADP in the presence of a proton gradient across the membrane. This is ATP synthase epsilon chain from Rhodopseudomonas palustris (strain BisA53).